We begin with the raw amino-acid sequence, 246 residues long: Large ribosomal subunit protein uL3 (246 aa).

Gln151 is modified (N5-methylglutamine).

Belongs to the universal ribosomal protein uL3 family. As to quaternary structure, part of the 50S ribosomal subunit. Forms a cluster with proteins L14 and L19. Methylated by PrmB.

One of the primary rRNA binding proteins, it binds directly near the 3'-end of the 23S rRNA, where it nucleates assembly of the 50S subunit. The protein is Large ribosomal subunit protein uL3 of Bartonella henselae (strain ATCC 49882 / DSM 28221 / CCUG 30454 / Houston 1) (Rochalimaea henselae).